The primary structure comprises 322 residues: Tetrahydromethanopterin S-methyltransferase subunit H (322 aa).

The protein belongs to the MtrH family. In terms of assembly, the complex is composed of 8 subunits; MtrA, MtrB, MtrC, MtrD, MtrE, MtrF, MtrG and MtrH.

It carries out the reaction 5-methyl-5,6,7,8-tetrahydromethanopterin + coenzyme M + 2 Na(+)(in) = 5,6,7,8-tetrahydromethanopterin + methyl-coenzyme M + 2 Na(+)(out). Its pathway is one-carbon metabolism; methanogenesis from CO(2); methyl-coenzyme M from 5,10-methylene-5,6,7,8-tetrahydromethanopterin: step 2/2. Functionally, part of a complex that catalyzes the formation of methyl-coenzyme M and tetrahydromethanopterin from coenzyme M and methyl-tetrahydromethanopterin. This is an energy-conserving, sodium-ion translocating step. MtrH catalyzes the transfer of the methyl group from methyl-tetrahydromethanopterin to the corrinoid prosthetic group of MtrA. This Methanopyrus kandleri (strain AV19 / DSM 6324 / JCM 9639 / NBRC 100938) protein is Tetrahydromethanopterin S-methyltransferase subunit H.